The sequence spans 537 residues: Aminopeptidase Y (537 aa).

The signal sequence occupies residues 1–21 (MHFSLKQLAVAAFYATNLGSA). The propeptide occupies 22 to 56 (YVIPQFFQEAFQQEEPIENYLPQLNDDDSSAVAAN). N-linked (GlcNAc...) asparagine glycosylation is found at asparagine 85, asparagine 96, asparagine 115, asparagine 150, and asparagine 162. Residues histidine 314 and aspartate 326 each contribute to the Zn(2+) site. The active-site Proton acceptor is the glutamate 358. Glutamate 359 contacts Zn(2+). Asparagine 371 carries N-linked (GlcNAc...) asparagine glycosylation. Residue aspartate 387 participates in Zn(2+) binding. Asparagine 427 carries an N-linked (GlcNAc...) asparagine glycan. Residue histidine 472 coordinates Zn(2+). N-linked (GlcNAc...) asparagine glycosylation is present at asparagine 480.

It belongs to the peptidase M28 family. M28A subfamily. In terms of assembly, monomer. Zn(2+) is required as a cofactor.

The protein resides in the vacuole. The catalysed reaction is Preferentially, release of N-terminal lysine.. This chain is Aminopeptidase Y (APE3), found in Saccharomyces cerevisiae (strain ATCC 204508 / S288c) (Baker's yeast).